A 231-amino-acid polypeptide reads, in one-letter code: MAQDIIDGINPTRMELLSLKNRTKLAVKGHGLLKEKRDALIKEFFDILDRVKGVREAAERSLKEANEALLEAQIAMGDLAVRKASLSVKESIDVDIKSRSVMGVSVPVTNVKMEERSIIDRGYSFSDTTIQLDEAAKKFEESIKFLIELGEVEKTIFLLAEEIEATKRRVNALEHIMIPRFENTEKYIDMRLQEMERENFVRLKMIRSTIEKKDNEAKEAAIEEEAAEVEA.

The protein belongs to the V-ATPase D subunit family. As to quaternary structure, has multiple subunits with at least A(3), B(3), C, D, E, F, H, I and proteolipid K(x).

The protein localises to the cell membrane. Functionally, component of the A-type ATP synthase that produces ATP from ADP in the presence of a proton gradient across the membrane. This Methanobrevibacter smithii (strain ATCC 35061 / DSM 861 / OCM 144 / PS) protein is A-type ATP synthase subunit D.